We begin with the raw amino-acid sequence, 256 residues long: Kallikrein 1-related peptidase-like b4 (256 aa).

The N-terminal stretch at 1–17 is a signal peptide; it reads MWFLILFLALSLGGIDA. Residues 18 to 24 form an activation peptide homolog region; it reads APPVQSQ. The Peptidase S1 domain maps to 18–253; it reads APPVQSQVDC…FSSWIRETMA (236 aa). A disulfide bond links cysteine 45 and cysteine 61. Glutamate 77 and histidine 84 together coordinate Zn(2+). 3 disulfide bridges follow: cysteine 147–cysteine 214, cysteine 179–cysteine 193, and cysteine 204–cysteine 229.

This sequence belongs to the peptidase S1 family. Kallikrein subfamily. As to quaternary structure, 7S nerve growth factor is composed of two alpha chains, a beta dimer composed of identical chains, and two gamma chains. Zn(2+) serves as cofactor. Post-translationally, the presence of Gln-24 prevents cleavage of the activation peptide, which remains attached at the amino end of the mature alpha chain.

This Mus musculus (Mouse) protein is Kallikrein 1-related peptidase-like b4 (Klk1b4).